The following is a 519-amino-acid chain: Protein BANP (519 aa).

3 positions are modified to phosphoserine: Ser19, Ser90, and Ser100. Residues Ile53–Ser90 are a coiled coil. Lys133 is covalently cross-linked (Glycyl lysine isopeptide (Lys-Gly) (interchain with G-Cter in SUMO2)). Residues Asn152–Ser342 form an interaction with CUX1 and HDAC1 region. Over residues Gly168–Gly177 the composition is skewed to basic and acidic residues. Residues Gly168–Gln196 form a disordered region. The segment covering Gly180–Ser189 has biased composition (low complexity). Positions Glu226–Lys322 constitute a BEN domain. Lys275 carries the post-translational modification N6-acetyllysine. The tract at residues Ser327–Pro364 is disordered. Positions Arg335 to Cys344 are enriched in polar residues. A phosphothreonine mark is found at Thr337 and Thr352. The interval Ser342–Gly393 is DNA-binding. Positions Ser351–Pro364 are enriched in pro residues.

The protein belongs to the BANP/SMAR1 family. Part of a corepressor complex containing BANP, HDAC1, SIN3A, SIN3B, RBL1 and RBL2. Forms a trimeric complex in the nucleus consisting of BANP, HDAC6 and KHDRBS1/SAM68; HDAC6 keeps KHDRBS1 in a deacetylated state which inhibits the inclusion of CD44 alternate exons. The complex is disrupted by MAPK1/MAPK3-mediated phosphorylation of BANP which results in BANP export to the cytoplasm. This facilitates acetylation of KHDRBS1 and CD44 variant exon inclusion. Interacts with TP53. Interacts with CUX1/CDP. Interacts with HDAC1. In terms of processing, MAPK1/MAPK3-mediated phosphorylation at Thr-337 and Thr-352 results in export to the cytoplasm. Down-regulated in breast cancer cell lines.

Its subcellular location is the nucleus. The protein resides in the nucleus speckle. The protein localises to the cytoplasm. In terms of biological role, controls V(D)J recombination during T-cell development by repressing T-cell receptor (TCR) beta enhancer function. Binds to scaffold/matrix attachment region beta (S/MARbeta), an ATC-rich DNA sequence located upstream of the TCR beta enhancer. Represses cyclin D1 transcription by recruiting HDAC1 to its promoter, thereby diminishing H3K9ac, H3S10ph and H4K8ac levels. Promotes TP53 activation, which causes cell cycle arrest. Plays a role in the regulation of alternative splicing. Binds to CD44 pre-mRNA and negatively regulates the inclusion of CD44 proximal variable exons v2-v6 but has no effect on distal variable exons v7-v10. This chain is Protein BANP (BANP), found in Homo sapiens (Human).